The chain runs to 227 residues: Cytidylate kinase (227 aa).

Position 12 to 20 (12 to 20 (GPSGAGKGT)) interacts with ATP.

It belongs to the cytidylate kinase family. Type 1 subfamily.

Its subcellular location is the cytoplasm. It catalyses the reaction CMP + ATP = CDP + ADP. The enzyme catalyses dCMP + ATP = dCDP + ADP. This is Cytidylate kinase from Xanthomonas euvesicatoria pv. vesicatoria (strain 85-10) (Xanthomonas campestris pv. vesicatoria).